The following is a 567-amino-acid chain: Thiol:disulfide interchange protein DsbD (567 aa).

An N-terminal signal peptide occupies residues 1-19 (MAQRIFTLILLLCSTSAFA). Disulfide bonds link cysteine 122–cysteine 128 and cysteine 185–cysteine 307. 8 helical membrane passes run 166-186 (LPFS…TPCV), 210-230 (LLLA…LGLV), 246-266 (YVLI…FGLF), 299-319 (IAGL…LLYI), 326-346 (WLGG…LMLV), 360-380 (WMAH…VFLL), 387-407 (AWGL…AFIT), and 418-438 (IVQI…QDWA). Positions 435 to 567 (QDWAFGSPSA…FSAHLHDRQP (133 aa)) constitute a Thioredoxin domain. A disulfide bridge links cysteine 482 with cysteine 485.

The protein belongs to the thioredoxin family. DsbD subfamily.

Its subcellular location is the cell inner membrane. It carries out the reaction [protein]-dithiol + NAD(+) = [protein]-disulfide + NADH + H(+). The enzyme catalyses [protein]-dithiol + NADP(+) = [protein]-disulfide + NADPH + H(+). Its function is as follows. Required to facilitate the formation of correct disulfide bonds in some periplasmic proteins and for the assembly of the periplasmic c-type cytochromes. Acts by transferring electrons from cytoplasmic thioredoxin to the periplasm. This transfer involves a cascade of disulfide bond formation and reduction steps. The sequence is that of Thiol:disulfide interchange protein DsbD from Salmonella choleraesuis (strain SC-B67).